An 802-amino-acid chain; its full sequence is Copal-8-ol diphosphate hydratase, chloroplastic (802 aa).

The N-terminal 24 residues, 1–24 (MQVIITSSHRFFCHHLHQLKSPTS), are a transit peptide targeting the chloroplast. K249 is a binding site for substrate. Residues D382 and D384 each coordinate Mg(2+). The DXDD motif signature appears at 382–385 (DVDD). Position 468 (K468) interacts with substrate.

The protein belongs to the terpene synthase family. The cofactor is Mg(2+). As to expression, expressed specifically in the secretory cells of the glandular trichomes.

The protein localises to the plastid. It localises to the chloroplast. The enzyme catalyses (2E,6E,10E)-geranylgeranyl diphosphate + H2O = 8-hydroxycopalyl diphosphate. It functions in the pathway secondary metabolite biosynthesis; terpenoid biosynthesis. Functionally, class-II terpene synthase that synthesizes 8-hydroxy-copalyl diphosphate. Involved in the biosynthesis of cis-abienol, a labdane diterpene that can be used as synthesis precursor of ambergris substitution fragance products. This chain is Copal-8-ol diphosphate hydratase, chloroplastic, found in Nicotiana tabacum (Common tobacco).